An 856-amino-acid polypeptide reads, in one-letter code: Alginate lyase 7 (856 aa).

PbH1 repeat units follow at residues 133–155 (DYNV…DPHE), 157–179 (TINL…VADF), 180–202 (QIGA…NIVT), 204–226 (SHDI…VVQR), 234–256 (VYNV…LIKM), 257–279 (STDV…RVQG), 280–304 (VEDV…EVIV), and 320–342 (TQNV…GIQE). Hemolysin-type calcium-binding repeat units follow at residues 387-402 (GSTG…IADL), 404-421 (VGGS…NDVL), 422-439 (EGGA…ADIF), 538-549 (GTEGDDSLTGNA), 554-563 (LDGGSGNDSL), 565-581 (GGLG…DDIL), 582-599 (NGGL…ADIF), 715-731 (GGAG…DDIL), and 733-749 (GGSE…ADVF).

Belongs to the D-mannuronate C5-epimerase family. Ca(2+) serves as cofactor.

The protein resides in the secreted. It catalyses the reaction Eliminative cleavage of alginate to give oligosaccharides with 4-deoxy-alpha-L-erythro-hex-4-enuronosyl groups at their non-reducing ends and beta-D-mannuronate at their reducing end.. The enzyme catalyses [(1-&gt;4)-beta-D-mannuronosyl](n) = [alginate](n). It functions in the pathway glycan biosynthesis; alginate biosynthesis. Its activity is regulated as follows. Inhibited by zinc. In terms of biological role, converts beta-D-mannuronic acid (M) to alpha-L-guluronic acid (G). Has both epimerase and lyase activities. Contributes to abortive encystment by degrading the coat from inside the cyst. Important for cyst germination. The polypeptide is Alginate lyase 7 (Azotobacter vinelandii).